The sequence spans 705 residues: Dolichyl-diphosphooligosaccharide--protein glycosyltransferase subunit STT3A (705 aa).

Residues 1–17 are Cytoplasmic-facing; the sequence is MTKLGFLRLSYEKQDTL. The chain crosses the membrane as a helical span at residues 18–38; it reads LKLLILSMAAVLSFSTRLFAV. Over 39-119 the chain is Lumenal; the sequence is LRFESVIHEF…IDIRNVCVFL (81 aa). The DXD motif 1 signature appears at 47 to 49; it reads EFD. A Mn(2+)-binding site is contributed by aspartate 49. The chain crosses the membrane as a helical span at residues 120 to 138; it reads APLFSSFTTIVTYHLTKEL. Over 139 to 140 the chain is Cytoplasmic; sequence KD. Residues 141–158 traverse the membrane as a helical segment; it reads AGAGLLAAAMIAVVPGYI. Over 159-169 the chain is Lumenal; that stretch reads SRSVAGSYDNE. The Mn(2+) site is built by aspartate 167 and glutamate 169. Residues 167–169 carry the DXD motif 2 motif; it reads DNE. Residues 170–189 traverse the membrane as a helical segment; the sequence is GIAIFCMLLTYYMWIKAVKT. At 190-191 the chain is on the cytoplasmic side; that stretch reads GS. The chain crosses the membrane as a helical span at residues 192–206; the sequence is IYWAAKCALAYFYMV. The Lumenal segment spans residues 207-211; it reads SSWGG. The chain crosses the membrane as a helical span at residues 212-228; that stretch reads YVFLINLIPLHVLVLML. Residues 229 to 233 lie on the Cytoplasmic side of the membrane; the sequence is TGRFS. Residues 234–259 traverse the membrane as a helical segment; the sequence is HRIYVAYCTVYCLGTILSMQISFVGF. At 260-267 the chain is on the lumenal side; sequence QPVLSSEH. A helical membrane pass occupies residues 268–287; the sequence is MAAFGVFGLCQIHAFVDYLR. Residues 288–300 lie on the Cytoplasmic side of the membrane; it reads SKLNPQQFEVLFR. The helical transmembrane segment at 301–321 threads the bilayer; it reads SVISLVGFVLLTIGALLMLTG. At 322–356 the chain is on the lumenal side; that stretch reads KISPWTGRFYSLLDPSYAKNNIPIIASVSEHQPTT. The short motif at 348-351 is the SVSE motif element; that stretch reads SVSE. The helical transmembrane segment at 357-379 threads the bilayer; the sequence is WSSYYFDLQLLVFMFPVGLYYCF. The Cytoplasmic segment spans residues 380 to 385; the sequence is SNLSDA. The helical transmembrane segment at 386 to 402 threads the bilayer; sequence RIFIIMYGVTSMYFSAV. Over 403–406 the chain is Lumenal; sequence MVRL. Arginine 405 is a dolichyl diphosphooligosaccharide binding site. A helical transmembrane segment spans residues 407 to 428; that stretch reads MLVLAPVMCILSGIGVSQVLST. Over 429-453 the chain is Cytoplasmic; sequence YMKNLDISRQDKKSKKQQDSTYPIK. Residues 454-473 form a helical membrane-spanning segment; it reads NEVASGMILVMAFFLITYTF. Residues 474 to 705 are Lumenal-facing; that stretch reads HSTWVTSEAY…DLDNRGLSRT (232 aa). Positions 525 to 527 are interacts with target acceptor peptide in protein substrate; sequence WWD. The WWDYG motif motif lies at 525–529; it reads WWDYG. Tyrosine 530 contributes to the dolichyl diphosphooligosaccharide binding site. N-linked (GlcNAc...) asparagine glycans are attached at residues asparagine 537 and asparagine 544. N-linked (GlcNAc...) (high mannose) asparagine glycosylation occurs at asparagine 548. Residues 592–599 carry the DK motif motif; that stretch reads DINKFLWM.

Belongs to the STT3 family. As to quaternary structure, component of the oligosaccharyltransferase (OST) complex. There are 2 OST complexes, OST-A and OST-B, which contain STT3A or STT3B as catalytic subunit, respectively. OST-A and OST-B contain common core subunits RPN1, RPN2, OST48, OST4, DAD1 and TMEM258, and OST-A contains DC2/OSTC and KRTCAP2/KCP2 specific accessory subunits. OST-A complex assembly occurs through the formation of 3 subcomplexes. Subcomplex 1 contains RPN1 and TMEM258, subcomplex 2 contains the OST-A-specific subunits STT3A, DC2/OSTC, and KCP2 as well as the core subunit OST4, and subcomplex 3 contains RPN2, DAD1, and OST48. The OST-A complex can form stable complexes with the Sec61 complex or with both the Sec61 and TRAP complexes. Mg(2+) is required as a cofactor. It depends on Mn(2+) as a cofactor.

It localises to the endoplasmic reticulum membrane. It carries out the reaction a di-trans,poly-cis-dolichyl diphosphooligosaccharide + L-asparaginyl-[protein] = N(4)-(oligosaccharide-(1-&gt;4)-N-acetyl-beta-D-glucosaminyl-(1-&gt;4)-N-acetyl-beta-D-glucosaminyl)-L-asparaginyl-[protein] + a di-trans,poly-cis-dolichyl diphosphate + H(+). It participates in protein modification; protein glycosylation. Its function is as follows. Catalytic subunit of the oligosaccharyl transferase (OST) complex that catalyzes the initial transfer of a defined glycan (Glc(3)Man(9)GlcNAc(2) in eukaryotes) from the lipid carrier dolichol-pyrophosphate to an asparagine residue within an Asn-X-Ser/Thr consensus motif in nascent polypeptide chains, the first step in protein N-glycosylation. N-glycosylation occurs cotranslationally and the complex associates with the Sec61 complex at the channel-forming translocon complex that mediates protein translocation across the endoplasmic reticulum (ER). All subunits are required for a maximal enzyme activity. This subunit contains the active site and the acceptor peptide and donor lipid-linked oligosaccharide (LLO) binding pockets. STT3A is present in the majority of OST complexes and mediates cotranslational N-glycosylation of most sites on target proteins, while STT3B-containing complexes are required for efficient post-translational glycosylation and mediate glycosylation of sites that have been skipped by STT3A. STT3A-containing OST-A complex is also required to prevent hyperglycosylation of some target proteins by preventing glycosylation of facultative sites before folding of target proteins is completed. In Bos taurus (Bovine), this protein is Dolichyl-diphosphooligosaccharide--protein glycosyltransferase subunit STT3A.